The chain runs to 101 residues: Antiviral protein CAP (101 aa).

Has antiviral activity against tobacco mosaic virus and antitumor activity. This chain is Antiviral protein CAP, found in Coprinus comatus (Shaggy mane).